Consider the following 190-residue polypeptide: Translation initiation factor IF-3 (190 aa).

The protein belongs to the IF-3 family. Monomer.

It localises to the cytoplasm. Its function is as follows. IF-3 binds to the 30S ribosomal subunit and shifts the equilibrium between 70S ribosomes and their 50S and 30S subunits in favor of the free subunits, thus enhancing the availability of 30S subunits on which protein synthesis initiation begins. The protein is Translation initiation factor IF-3 of Prochlorococcus marinus (strain MIT 9312).